The chain runs to 400 residues: Cysteine desulfurase 1 (400 aa).

Pyridoxal 5'-phosphate-binding positions include 71–72, Asn150, Gln178, and 198–200; these read GT and SGH. N6-(pyridoxal phosphate)lysine is present on Lys201. Thr236 contacts pyridoxal 5'-phosphate. Catalysis depends on Cys324, which acts as the Cysteine persulfide intermediate. Position 324 (Cys324) interacts with [2Fe-2S] cluster.

The protein belongs to the class-V pyridoxal-phosphate-dependent aminotransferase family. NifS/IscS subfamily. Homodimer. The cofactor is pyridoxal 5'-phosphate.

It carries out the reaction (sulfur carrier)-H + L-cysteine = (sulfur carrier)-SH + L-alanine. Functionally, catalyzes the removal of elemental sulfur atoms from cysteine to produce alanine. Seems to participate in the biosynthesis of the nitrogenase metalloclusters by providing the inorganic sulfur required for the Fe-S core formation. The sequence is that of Cysteine desulfurase 1 from Trichormus variabilis (strain ATCC 29413 / PCC 7937) (Anabaena variabilis).